We begin with the raw amino-acid sequence, 302 residues long: 33 kDa chaperonin (302 aa).

Cystine bridges form between Cys240/Cys242 and Cys273/Cys276.

It belongs to the HSP33 family. In terms of processing, under oxidizing conditions two disulfide bonds are formed involving the reactive cysteines. Under reducing conditions zinc is bound to the reactive cysteines and the protein is inactive.

It localises to the cytoplasm. Its function is as follows. Redox regulated molecular chaperone. Protects both thermally unfolding and oxidatively damaged proteins from irreversible aggregation. Plays an important role in the bacterial defense system toward oxidative stress. The protein is 33 kDa chaperonin of Synechocystis sp. (strain ATCC 27184 / PCC 6803 / Kazusa).